The chain runs to 195 residues: Imidazoleglycerol-phosphate dehydratase (195 aa).

Belongs to the imidazoleglycerol-phosphate dehydratase family.

The protein resides in the cytoplasm. It catalyses the reaction D-erythro-1-(imidazol-4-yl)glycerol 3-phosphate = 3-(imidazol-4-yl)-2-oxopropyl phosphate + H2O. Its pathway is amino-acid biosynthesis; L-histidine biosynthesis; L-histidine from 5-phospho-alpha-D-ribose 1-diphosphate: step 6/9. This chain is Imidazoleglycerol-phosphate dehydratase, found in Deinococcus radiodurans (strain ATCC 13939 / DSM 20539 / JCM 16871 / CCUG 27074 / LMG 4051 / NBRC 15346 / NCIMB 9279 / VKM B-1422 / R1).